Consider the following 216-residue polypeptide: Probable transaldolase (216 aa).

Lys83 functions as the Schiff-base intermediate with substrate in the catalytic mechanism.

The protein belongs to the transaldolase family. Type 3B subfamily.

It is found in the cytoplasm. The catalysed reaction is D-sedoheptulose 7-phosphate + D-glyceraldehyde 3-phosphate = D-erythrose 4-phosphate + beta-D-fructose 6-phosphate. The protein operates within carbohydrate degradation; pentose phosphate pathway; D-glyceraldehyde 3-phosphate and beta-D-fructose 6-phosphate from D-ribose 5-phosphate and D-xylulose 5-phosphate (non-oxidative stage): step 2/3. In terms of biological role, transaldolase is important for the balance of metabolites in the pentose-phosphate pathway. This is Probable transaldolase from Thermosipho africanus (strain TCF52B).